Consider the following 137-residue polypeptide: Peptide methionine sulfoxide reductase MsrB (137 aa).

A MsrB domain is found at 7–129 (AEELKKKLSE…NSASLAFSDE (123 aa)). Positions 46, 49, 95, and 98 each coordinate Zn(2+). Cys118 serves as the catalytic Nucleophile.

Belongs to the MsrB Met sulfoxide reductase family. Requires Zn(2+) as cofactor.

It carries out the reaction L-methionyl-[protein] + [thioredoxin]-disulfide + H2O = L-methionyl-(R)-S-oxide-[protein] + [thioredoxin]-dithiol. This is Peptide methionine sulfoxide reductase MsrB from Salmonella dublin (strain CT_02021853).